A 224-amino-acid polypeptide reads, in one-letter code: MPGRAPLRTVPGALGAWLLGGLWAWTLCGLCSLGAVGAPRPCQAPQQWEGRQVMYQQSSGRNSRALLSYDGLNQRVRVLDERKALIPCKRLFEYILLYKDGVMFQIDQATKQCSKMTLTQPWDPLDIPQNSTFEDQYSIGGPQEQITVQEWSDRKSARSYETWIGIYTVKDCYPVQETFTINYSVILSTRFFDIQLGIKDPSVFTPPSTCQMAQLEKMSEDCSW.

A signal peptide spans 1–37 (MPGRAPLRTVPGALGAWLLGGLWAWTLCGLCSLGAVG). Intrachain disulfides connect Cys-42/Cys-172, Cys-88/Cys-222, and Cys-113/Cys-210. N-linked (GlcNAc...) asparagine glycosylation is found at Asn-130 and Asn-182.

Belongs to the ependymin family. Homodimer. Post-translationally, N-glycosylated; the glycan contains mannose-6-phosphate moieties. Ubiquitous. Detected in brain, heart, skeletal muscle, kidney, testis, ovary and prostate.

It localises to the lysosome lumen. It is found in the secreted. Binds anionic lipids and gangliosides at acidic pH. The polypeptide is Mammalian ependymin-related protein 1 (EPDR1) (Homo sapiens (Human)).